The primary structure comprises 249 residues: ATP synthase subunit a, chloroplastic (249 aa).

Helical transmembrane passes span 40 to 60 (QVLITSWVVIAILLGSAIVAV), 97 to 117 (VPFIGTMFLFIFVSNWAGALL), 136 to 156 (INTTVALALLTSIAYFYAGLS), 201 to 221 (LVVVVLVSLVPSVVPIPVMFL), and 222 to 242 (GLFTSGIQALIFATLAAAYIG).

It belongs to the ATPase A chain family. F-type ATPases have 2 components, CF(1) - the catalytic core - and CF(0) - the membrane proton channel. CF(1) has five subunits: alpha(3), beta(3), gamma(1), delta(1), epsilon(1). CF(0) has four main subunits: a, b, b' and c.

The protein localises to the plastid. It localises to the chloroplast thylakoid membrane. Functionally, key component of the proton channel; it plays a direct role in the translocation of protons across the membrane. The polypeptide is ATP synthase subunit a, chloroplastic (Manihot esculenta (Cassava)).